The primary structure comprises 1869 residues: Chitin synthase csm1 (1869 aa).

Residues 1 to 778 (MAQHRCVGGN…CWMEIAQLSD (778 aa)) form the Myosin motor domain. Residue 103–110 (GESGSGKT) participates in ATP binding. Residues Asn-122, Asn-290, Asn-427, and Asn-558 are each glycosylated (N-linked (GlcNAc...) asparagine). The tract at residues 579 to 653 (HPQERTTVMQ…KPSEEGASGQ (75 aa)) is disordered. The span at 583 to 593 (RTTVMQASVSS) shows a compositional bias: polar residues. Residues 658-682 (LDNVTKSFHAQNTNAYFVFCLKPND) are actin-binding. The N-linked (GlcNAc...) asparagine glycan is linked to Asn-660. A run of 2 helical transmembrane segments spans residues 880-900 (WVFI…QHLG) and 919-939 (FIIW…PMLV). Residues Asn-1029, Asn-1054, and Asn-1120 are each glycosylated (N-linked (GlcNAc...) asparagine). Residues 1191 to 1211 (FILAVTIILCSIIAFKFFAAL) traverse the membrane as a helical segment. N-linked (GlcNAc...) asparagine glycans are attached at residues Asn-1448 and Asn-1554. A run of 3 helical transmembrane segments spans residues 1579 to 1599 (FIVF…AYIV), 1612 to 1632 (VPVL…IIFI), and 1639 to 1659 (MIAW…GLPL). A DEK-C domain is found at 1811-1866 (LPSDDALLAEIREILRTADLMTVTKKGVKQELERRFGVNLDSRRAYINSATEALLS).

It in the N-terminal section; belongs to the TRAFAC class myosin-kinesin ATPase superfamily. Myosin family. In the C-terminal section; belongs to the chitin synthase family. Class V subfamily.

It localises to the cell membrane. It is found in the cell septum. The protein resides in the cell tip. It carries out the reaction [(1-&gt;4)-N-acetyl-beta-D-glucosaminyl](n) + UDP-N-acetyl-alpha-D-glucosamine = [(1-&gt;4)-N-acetyl-beta-D-glucosaminyl](n+1) + UDP + H(+). In terms of biological role, polymerizes chitin, a structural polymer of the cell wall and septum, by transferring the sugar moiety of UDP-GlcNAc to the non-reducing end of the growing chitin polymer. Involved in mycelial growth. The protein is Chitin synthase csm1 of Pyricularia grisea (Crabgrass-specific blast fungus).